A 287-amino-acid polypeptide reads, in one-letter code: MSLQALYDVPAPAKLNLFLHVTGRRDDGYHLLQSVFALIDWADTLHFERRLDGRLVRHDLAAALPEDDLCLRAARLLQRESACPLGADISIDKDVPWGAGLGGGSSDAASTLLALNRLWGLHWSRERLLALGLQLGADVPFFVGGHNAWVEGIGERLTPIELAPRWWAVLKPAVAVPTVAIFGSPLLVRNTAAATISDFSANAVEFGHNDLQTPAMAYSDEVVQALALLQSRYGASRMSGSGSAVFAEAGTGESPTVAMMEAASLPPSWVGRMCRGLTVHPLALWAG.

Lys14 is a catalytic residue. 96-106 (PWGAGLGGGSS) contacts ATP. Asp138 is an active-site residue.

The protein belongs to the GHMP kinase family. IspE subfamily.

The enzyme catalyses 4-CDP-2-C-methyl-D-erythritol + ATP = 4-CDP-2-C-methyl-D-erythritol 2-phosphate + ADP + H(+). It functions in the pathway isoprenoid biosynthesis; isopentenyl diphosphate biosynthesis via DXP pathway; isopentenyl diphosphate from 1-deoxy-D-xylulose 5-phosphate: step 3/6. Catalyzes the phosphorylation of the position 2 hydroxy group of 4-diphosphocytidyl-2C-methyl-D-erythritol. In Methylibium petroleiphilum (strain ATCC BAA-1232 / LMG 22953 / PM1), this protein is 4-diphosphocytidyl-2-C-methyl-D-erythritol kinase.